The sequence spans 63 residues: Large ribosomal subunit protein bL35 (63 aa).

Basic residues predominate over residues 1–15 (MPKIKTHRGAAKRFK). Residues 1–26 (MPKIKTHRGAAKRFKQTAGGKWKGSH) are disordered.

The protein belongs to the bacterial ribosomal protein bL35 family.

The chain is Large ribosomal subunit protein bL35 from Pelotomaculum thermopropionicum (strain DSM 13744 / JCM 10971 / SI).